Consider the following 597-residue polypeptide: NADH-quinone oxidoreductase subunit C/D (597 aa).

The segment at 1–188 (MKKEIKRDDV…DPYVLNKYKE (188 aa)) is NADH dehydrogenase I subunit C. Positions 211–597 (KYMFLNLGPN…IDFVMSDVDR (387 aa)) are NADH dehydrogenase I subunit D.

The protein in the N-terminal section; belongs to the complex I 30 kDa subunit family. In the C-terminal section; belongs to the complex I 49 kDa subunit family. As to quaternary structure, NDH-1 is composed of 13 different subunits. Subunits NuoB, CD, E, F, and G constitute the peripheral sector of the complex.

It localises to the cell inner membrane. The catalysed reaction is a quinone + NADH + 5 H(+)(in) = a quinol + NAD(+) + 4 H(+)(out). Its function is as follows. NDH-1 shuttles electrons from NADH, via FMN and iron-sulfur (Fe-S) centers, to quinones in the respiratory chain. The immediate electron acceptor for the enzyme in this species is believed to be ubiquinone. Couples the redox reaction to proton translocation (for every two electrons transferred, four hydrogen ions are translocated across the cytoplasmic membrane), and thus conserves the redox energy in a proton gradient. The sequence is that of NADH-quinone oxidoreductase subunit C/D from Buchnera aphidicola subsp. Baizongia pistaciae (strain Bp).